Consider the following 179-residue polypeptide: Large ribosomal subunit protein uL6 (179 aa).

This sequence belongs to the universal ribosomal protein uL6 family. As to quaternary structure, part of the 50S ribosomal subunit.

Its function is as follows. This protein binds to the 23S rRNA, and is important in its secondary structure. It is located near the subunit interface in the base of the L7/L12 stalk, and near the tRNA binding site of the peptidyltransferase center. The protein is Large ribosomal subunit protein uL6 of Geobacter sulfurreducens (strain ATCC 51573 / DSM 12127 / PCA).